A 123-amino-acid chain; its full sequence is Ig heavy chain V region H8 (123 aa).

Positions 1–114 (EVKLVESGGG…BSYWYFDVWG (114 aa)) constitute an Ig-like domain.

The sequence is that of Ig heavy chain V region H8 from Mus musculus (Mouse).